We begin with the raw amino-acid sequence, 134 residues long: MIEVGEYKVKEGLYYTKEHEWAQVLEDGTVLVGITDYAQKELGDIAYVELPEVGKEVKKGEVLCEVESVKAVSEVYAPVSGEVIEVNEELSDSPEKINEDPYGAWIAKIKPNNLEEELKELMDAEKYAEFLKSL.

Residues 29 to 110 (TVLVGITDYA…PYGAWIAKIK (82 aa)) enclose the Lipoyl-binding domain. The residue at position 70 (K70) is an N6-lipoyllysine.

Belongs to the GcvH family. In terms of assembly, the glycine cleavage system is composed of four proteins: P, T, L and H. (R)-lipoate serves as cofactor.

The glycine cleavage system catalyzes the degradation of glycine. The H protein shuttles the methylamine group of glycine from the P protein to the T protein. In Pyrococcus abyssi (strain GE5 / Orsay), this protein is Probable glycine cleavage system H protein.